Consider the following 205-residue polypeptide: CMRF35-like molecule 2 (205 aa).

An N-terminal signal peptide occupies residues 1 to 17; that stretch reads MWLLPALLLLCLSGCLS. The 103-residue stretch at 18 to 120 folds into the Ig-like V-type domain; that stretch reads LKGPGSVTGT…VLDSWSRDPS (103 aa). The Extracellular portion of the chain corresponds to 18-173; that stretch reads LKGPGSVTGT…NSGFRLSSPH (156 aa). Cysteine 36 and cysteine 104 form a disulfide bridge. A glycan (N-linked (GlcNAc...) asparagine) is linked at asparagine 154. A helical membrane pass occupies residues 174 to 194; sequence FLLVVLLKLPLLLSMLGAVFW. Over 195 to 205 the chain is Cytoplasmic; it reads VNRPQWAPPGR.

This sequence belongs to the CD300 family. In terms of assembly, interacts with TYROBP. In terms of processing, N-glycosylated. In terms of tissue distribution, present on the surface of mature hematopoietic cells of the monocyte and myeloid lineages (at protein level).

The protein localises to the cell membrane. Its function is as follows. Probably acts as an activating receptor. The polypeptide is CMRF35-like molecule 2 (CD300E) (Homo sapiens (Human)).